Here is a 325-residue protein sequence, read N- to C-terminus: Glutarate 2-hydroxylase (325 aa).

Residues His-160, Asp-162, and His-292 each coordinate Fe cation.

It belongs to the glutarate hydroxylase family. As to quaternary structure, homotetramer. Fe(2+) serves as cofactor.

It carries out the reaction glutarate + 2-oxoglutarate + O2 = (S)-2-hydroxyglutarate + succinate + CO2. The protein operates within amino-acid degradation. In terms of biological role, acts as an alpha-ketoglutarate-dependent dioxygenase catalyzing hydroxylation of glutarate (GA) to L-2-hydroxyglutarate (L2HG). Functions in a L-lysine degradation pathway that proceeds via cadaverine, glutarate and L-2-hydroxyglutarate. The polypeptide is Glutarate 2-hydroxylase (Escherichia coli (strain 55989 / EAEC)).